Reading from the N-terminus, the 443-residue chain is Tol-Pal system protein TolB (443 aa).

Residues M1–A33 form the signal peptide.

It belongs to the TolB family. The Tol-Pal system is composed of five core proteins: the inner membrane proteins TolA, TolQ and TolR, the periplasmic protein TolB and the outer membrane protein Pal. They form a network linking the inner and outer membranes and the peptidoglycan layer.

It localises to the periplasm. Its function is as follows. Part of the Tol-Pal system, which plays a role in outer membrane invagination during cell division and is important for maintaining outer membrane integrity. The protein is Tol-Pal system protein TolB of Brucella suis (strain ATCC 23445 / NCTC 10510).